A 309-amino-acid chain; its full sequence is UPF0252 protein PH0672 (309 aa).

2 helical membrane passes run 5–25 and 106–126; these read SVIIFIVIMLGIGCLNLNESI and AVLTAGLLLASNISPVYLMIF.

Belongs to the UPF0252 family.

The protein resides in the cell membrane. The chain is UPF0252 protein PH0672 from Pyrococcus horikoshii (strain ATCC 700860 / DSM 12428 / JCM 9974 / NBRC 100139 / OT-3).